The sequence spans 158 residues: Disease resistance response protein DRRG49-C (158 aa).

Belongs to the BetVI family.

This is Disease resistance response protein DRRG49-C from Pisum sativum (Garden pea).